The following is a 231-amino-acid chain: Uracil-DNA glycosylase (231 aa).

Asp71 acts as the Proton acceptor in catalysis.

The protein belongs to the uracil-DNA glycosylase (UDG) superfamily. UNG family.

The protein localises to the cytoplasm. The enzyme catalyses Hydrolyzes single-stranded DNA or mismatched double-stranded DNA and polynucleotides, releasing free uracil.. Its function is as follows. Excises uracil residues from the DNA which can arise as a result of misincorporation of dUMP residues by DNA polymerase or due to deamination of cytosine. This is Uracil-DNA glycosylase from Pseudomonas aeruginosa (strain ATCC 15692 / DSM 22644 / CIP 104116 / JCM 14847 / LMG 12228 / 1C / PRS 101 / PAO1).